Consider the following 932-residue polypeptide: LPS-assembly protein LptD (932 aa).

Residues 1–33 (MALKSPAFRRKFPLLVTGGLLALQPLATSYAVA) form the signal peptide. The segment at 54–87 (PVNNLPPRPVHEGAAVSSGTEAASEGETADRPML) is disordered.

This sequence belongs to the LptD family. In terms of assembly, component of the lipopolysaccharide transport and assembly complex. Interacts with LptE and LptA.

The protein resides in the cell outer membrane. In terms of biological role, together with LptE, is involved in the assembly of lipopolysaccharide (LPS) at the surface of the outer membrane. The polypeptide is LPS-assembly protein LptD (Pseudomonas putida (strain GB-1)).